The following is a 131-amino-acid chain: Leptin receptor gene-related protein (131 aa).

4 helical membrane-spanning segments follow: residues 7-27 (LVALSFSGAIGLTFLMLGCAL), 32-52 (VYWPLFVLIFHAISPIPHFIA), 69-89 (LAYFFTTGIVVSAFGFPVILA), and 100-120 (GLVLAGNAVIFLTIQGFFLIF).

This sequence belongs to the OB-RGRP/VPS55 family. As to quaternary structure, interacts with LEPR. Interacts with RAB13. Expressed at the highest levels in heart and placenta and at a lesser extent in lung, liver, skeletal muscle, kidney and pancreas.

Its subcellular location is the golgi apparatus membrane. It localises to the endosome membrane. Negatively regulates leptin receptor (LEPR) cell surface expression, and thus decreases response to leptin. Negatively regulates growth hormone (GH) receptor cell surface expression in liver. May play a role in liver resistance to GH during periods of reduced nutrient availability. The polypeptide is Leptin receptor gene-related protein (LEPROT) (Homo sapiens (Human)).